We begin with the raw amino-acid sequence, 423 residues long: Zinc-type alcohol dehydrogenase-like protein C1198.01 (423 aa).

Positions 14–36 are disordered; sequence KQLGHREVSEGSTQPKPDPSGAT. The Zn(2+) site is built by Cys74, His97, Cys127, Cys130, Cys133, and Cys141.

Belongs to the zinc-containing alcohol dehydrogenase family. Class-III subfamily. Zn(2+) serves as cofactor.

It localises to the golgi apparatus. The polypeptide is Zinc-type alcohol dehydrogenase-like protein C1198.01 (Schizosaccharomyces pombe (strain 972 / ATCC 24843) (Fission yeast)).